The chain runs to 244 residues: MNLEGKVALVTGASRGIGKAIAELLAERGAKVIGTATSESGAQAISDYLGDNGKGMALNVTNPESIEAVLKAITDEFGGVDILVNNAGITRDNLLMRMKEEEWSDIMETNLTSIFRLSKAVLRGMMKKRQGRIINVGSVVGTMGNAGQANYAAAKAGVIGFTKSMAREVASRGVTVNTVAPGFIETDMTKALNDEQRTATLAQVPAGRLGDPREIASAVAFLASPEAAYITGETLHVNGGMYMI.

Residues 12–15 (GASR), T37, 59–60 (NV), and N86 contribute to the NADP(+) site. A substrate-binding site is contributed by S138. Y151 (proton acceptor) is an active-site residue. NADP(+) is bound by residues 151–155 (YAAAK) and I184.

This sequence belongs to the short-chain dehydrogenases/reductases (SDR) family. Homotetramer.

It catalyses the reaction a (3R)-hydroxyacyl-[ACP] + NADP(+) = a 3-oxoacyl-[ACP] + NADPH + H(+). It participates in lipid metabolism; fatty acid biosynthesis. Catalyzes the NADPH-dependent reduction of beta-ketoacyl-ACP substrates to beta-hydroxyacyl-ACP products, the first reductive step in the elongation cycle of fatty acid biosynthesis. The polypeptide is 3-oxoacyl-[acyl-carrier-protein] reductase FabG (fabG) (Vibrio cholerae serotype O1 (strain ATCC 39315 / El Tor Inaba N16961)).